The chain runs to 193 residues: Putative 3-methyladenine DNA glycosylase (193 aa).

Belongs to the DNA glycosylase MPG family.

In Agrobacterium fabrum (strain C58 / ATCC 33970) (Agrobacterium tumefaciens (strain C58)), this protein is Putative 3-methyladenine DNA glycosylase.